A 537-amino-acid chain; its full sequence is NAD(P)H-quinone oxidoreductase chain 4 3 (537 aa).

Transmembrane regions (helical) follow at residues 6-26 (FPWL…IPII), 36-56 (WYGL…FWHY), 87-107 (LSMP…FAAW), 115-135 (LFYG…VAQD), 136-156 (LLLF…LISI), 169-189 (FILY…ALAF), 209-229 (AIEL…LPIF), 243-263 (SAPG…YALI), 277-297 (FAPV…CCAF), 314-334 (MGFV…GAVL), 335-355 (QMVS…VTYE), 387-407 (LALP…GIAT), and 417-437 (VVVV…LLSL).

It belongs to the complex I subunit 4 family.

The protein localises to the cellular thylakoid membrane. The enzyme catalyses a plastoquinone + NADH + (n+1) H(+)(in) = a plastoquinol + NAD(+) + n H(+)(out). The catalysed reaction is a plastoquinone + NADPH + (n+1) H(+)(in) = a plastoquinol + NADP(+) + n H(+)(out). In terms of biological role, NDH-1 shuttles electrons from NAD(P)H, via FMN and iron-sulfur (Fe-S) centers, to quinones in the respiratory chain. The immediate electron acceptor for the enzyme in this species is believed to be plastoquinone. Couples the redox reaction to proton translocation (for every two electrons transferred, four hydrogen ions are translocated across the cytoplasmic membrane), and thus conserves the redox energy in a proton gradient. This chain is NAD(P)H-quinone oxidoreductase chain 4 3, found in Trichormus variabilis (strain ATCC 29413 / PCC 7937) (Anabaena variabilis).